The following is a 245-amino-acid chain: Carbohydrate deacetylase 1 (245 aa).

2 residues coordinate Mg(2+): His-59 and His-125.

This sequence belongs to the YdjC deacetylase family. In terms of assembly, homodimer. Requires Mg(2+) as cofactor.

In terms of biological role, probably catalyzes the deacetylation of acetylated carbohydrates an important step in the degradation of oligosaccharides. The protein is Carbohydrate deacetylase 1 of Listeria innocua serovar 6a (strain ATCC BAA-680 / CLIP 11262).